Consider the following 284-residue polypeptide: Nucleoid occlusion protein (284 aa).

Positions Glu-143 to Leu-162 form a DNA-binding region, H-T-H motif.

This sequence belongs to the ParB family.

Its subcellular location is the cytoplasm. It localises to the nucleoid. Its function is as follows. Effects nucleoid occlusion by binding relatively nonspecifically to DNA and preventing the assembly of the division machinery in the vicinity of the nucleoid, especially under conditions that disturb the cell cycle. It helps to coordinate cell division and chromosome segregation by preventing the formation of the Z ring through the nucleoid, which would cause chromosome breakage. This Listeria innocua serovar 6a (strain ATCC BAA-680 / CLIP 11262) protein is Nucleoid occlusion protein.